The sequence spans 287 residues: Cell wall-binding protein YocH (287 aa).

Residues 1–25 (MKKTIMSFVAVAALSTTAFGAHASA) form the signal peptide. LysM domains are found at residues 26–69 (KEIT…KLTI) and 78–121 (GQYT…TLSV). Low complexity predominate over residues 130–143 (TATENAQTNAPQAA). A disordered region spans residues 130–193 (TATENAQTNA…SNTNNQEASK (64 aa)). The span at 165–181 (QETKAEAETSVNTEEKA) shows a compositional bias: basic and acidic residues. The span at 182–193 (VQSNTNNQEASK) shows a compositional bias: polar residues.

It localises to the secreted. The protein resides in the cell wall. The polypeptide is Cell wall-binding protein YocH (yocH) (Bacillus subtilis (strain 168)).